Reading from the N-terminus, the 436-residue chain is uncharacterized protein (436 aa).

A signal peptide spans 1-19 (MKKLLLASIIGLASTTSFA).

This is an uncharacterized protein from Rickettsia bellii (strain RML369-C).